A 1228-amino-acid polypeptide reads, in one-letter code: Serine/threonine-protein kinase CST20 (1228 aa).

Residues 1 to 18 (MSILSENNPTQTSITDPN) are compositionally biased toward polar residues. Disordered regions lie at residues 1-382 (MSIL…TAHN) and 405-468 (NSTN…HSQE). Low complexity-rich tracts occupy residues 57-70 (NTTS…SLGS) and 95-123 (ESGS…NPES). Basic and acidic residues predominate over residues 148–159 (HQGDDSDNEKQY). Polar residues-rich tracts occupy residues 173 to 195 (DSYS…NNVS), 205 to 222 (TSSL…NENA), and 232 to 244 (PQVS…SFHD). Positions 246–255 (SSVISSSTSV) are enriched in low complexity. Polar residues-rich tracts occupy residues 260-275 (SNPT…SYKS) and 309-328 (DTLS…TLQG). Low complexity predominate over residues 347-367 (NTSATSRNTSGTSTSTVVKNS). The segment covering 368–382 (RSGTSKLTSTSTAHN) has biased composition (polar residues). Residues 437 to 466 (KVRGVFSSMFGKNKSTSSSSSSNSGSNSHS) are compositionally biased toward low complexity. One can recognise a CRIB domain in the interval 473-486 (ISTPFNAKHLAHVG). Disordered regions lie at residues 543 to 829 (FHFD…ALAD) and 865 to 917 (LREK…KQAA). Residues 548–559 (NKSSSSGWSNEN) are compositionally biased toward polar residues. Over residues 568–579 (SNSGSGGGGGGA) the composition is skewed to gly residues. The span at 602–611 (ITPSQSMPTK) shows a compositional bias: polar residues. Positions 612–626 (TESKQSENQHPHEDN) are enriched in basic and acidic residues. A compositionally biased stretch (polar residues) spans 627–640 (ATQYTPRTPTSHVQ). 3 stretches are compositionally biased toward low complexity: residues 668–681 (PSSQ…SQSD), 693–708 (ISPS…SKSL), and 734–747 (SIPK…SLSS). Positions 748–759 (QLRPATNGSTTA) are enriched in polar residues. A compositionally biased stretch (pro residues) spans 787–805 (APPPPPSASPAPPVPPAPP). The span at 809–824 (LSEQTSEIPQQRTAPS) shows a compositional bias: polar residues. Positions 865–874 (LREKNERQNR) are enriched in basic and acidic residues. Polar residues predominate over residues 875 to 890 (QQETGQNNADTASGGS). In terms of domain architecture, Protein kinase spans 951-1203 (YVDLVKIGQG…ADELLHDNFI (253 aa)). Residues 957–965 (IGQGASGGV) and Lys981 contribute to the ATP site. The active-site Proton acceptor is Asp1071.

The protein belongs to the protein kinase superfamily. STE Ser/Thr protein kinase family. STE20 subfamily.

It localises to the cytoplasm. It is found in the nucleus. It catalyses the reaction L-seryl-[protein] + ATP = O-phospho-L-seryl-[protein] + ADP + H(+). The catalysed reaction is L-threonyl-[protein] + ATP = O-phospho-L-threonyl-[protein] + ADP + H(+). In terms of biological role, MAP4K component of the MAPK pathway required for the mating pheromone response, and the regulation of cell polarity and cell cycle. Phosphorylates histone H2B to form H2BS10ph. Required for hyphal formation and virulence. The polypeptide is Serine/threonine-protein kinase CST20 (CST20) (Candida albicans (strain SC5314 / ATCC MYA-2876) (Yeast)).